A 319-amino-acid chain; its full sequence is ATP-dependent 6-phosphofructokinase (319 aa).

Gly11 is an ATP binding site. Residue 21–25 (RAVVR) participates in ADP binding. Residues 72–73 (RC) and 102–105 (GDGS) contribute to the ATP site. Position 103 (Asp103) interacts with Mg(2+). Substrate is bound at residue 125–127 (TID). Asp127 acts as the Proton acceptor in catalysis. Arg154 is an ADP binding site. Substrate contacts are provided by residues Arg162 and 169–171 (MGR). Residues 185 to 187 (GAE), Arg211, and 213 to 215 (KKH) each bind ADP. Residues Glu222, Arg243, and 249-252 (HIQR) contribute to the substrate site.

The protein belongs to the phosphofructokinase type A (PFKA) family. ATP-dependent PFK group I subfamily. Prokaryotic clade 'B1' sub-subfamily. In terms of assembly, homotetramer. Mg(2+) serves as cofactor.

Its subcellular location is the cytoplasm. The enzyme catalyses beta-D-fructose 6-phosphate + ATP = beta-D-fructose 1,6-bisphosphate + ADP + H(+). It functions in the pathway carbohydrate degradation; glycolysis; D-glyceraldehyde 3-phosphate and glycerone phosphate from D-glucose: step 3/4. With respect to regulation, allosterically activated by ADP and other diphosphonucleosides, and allosterically inhibited by phosphoenolpyruvate. Functionally, catalyzes the phosphorylation of D-fructose 6-phosphate to fructose 1,6-bisphosphate by ATP, the first committing step of glycolysis. The sequence is that of ATP-dependent 6-phosphofructokinase from Halalkalibacterium halodurans (strain ATCC BAA-125 / DSM 18197 / FERM 7344 / JCM 9153 / C-125) (Bacillus halodurans).